Here is a 478-residue protein sequence, read N- to C-terminus: Glycogen synthase (478 aa).

Lysine 15 is a binding site for ADP-alpha-D-glucose.

It belongs to the glycosyltransferase 1 family. Bacterial/plant glycogen synthase subfamily.

The enzyme catalyses [(1-&gt;4)-alpha-D-glucosyl](n) + ADP-alpha-D-glucose = [(1-&gt;4)-alpha-D-glucosyl](n+1) + ADP + H(+). Its pathway is glycan biosynthesis; glycogen biosynthesis. Its function is as follows. Synthesizes alpha-1,4-glucan chains using ADP-glucose. This is Glycogen synthase from Bacillus cytotoxicus (strain DSM 22905 / CIP 110041 / 391-98 / NVH 391-98).